A 342-amino-acid polypeptide reads, in one-letter code: Serpentine receptor class beta-16 (342 aa).

The Extracellular portion of the chain corresponds to 1–22 (MDRELIEICKENSATAFSVGYQ). Residues 23-43 (IVYLIYVVLSVTSIFTCSYFI) form a helical membrane-spanning segment. Residues 44-61 (KTFIWNSTFHPNFKLLLT) lie on the Cytoplasmic side of the membrane. Residues 62 to 82 (MYFFAAIFHSFLFTASYLMMI) traverse the membrane as a helical segment. Topologically, residues 83–102 (ERFLDYQTDCDIHVSMVPYA) are extracellular. The chain crosses the membrane as a helical span at residues 103–123 (IVHSSIACCLFCGMLTQVFMV). Over 124 to 141 (IERLLATIKIESYEHNTS) the chain is Cytoplasmic. The helical transmembrane segment at 142-162 (FWHILAYLFFCIVLPLSLLVW) threads the bilayer. The Extracellular segment spans residues 163–187 (AYQDADYNSPVITAISPPKGVEIRL). Residues 188 to 208 (NILYIFCFFLAILALILLQVV) traverse the membrane as a helical segment. Residues 209-237 (RFVNKRRESRIEISLSGRFQIVENIDTTT) are Cytoplasmic-facing. A helical membrane pass occupies residues 238–258 (FISSILIINMIMSVIYIVGTF). Residues 259–274 (TLRNFQFDAFINNQPA) are Extracellular-facing. The helical transmembrane segment at 275–295 (LATVKTIFYLHPLFSFLMPLI) threads the bilayer. Residues 296-342 (SSYHLSKMRERRVKRREHLMAIKTKGREGSDAYNQLLHDQWTQHFLK) are Cytoplasmic-facing.

Belongs to the nematode receptor-like protein srb family. In terms of tissue distribution, expressed throughout the nervous system, in pharyngeal muscle, hermaphrodite vulval muscles and in the male tail. Not expressed in male somatic gonads or sperm.

The protein resides in the cell membrane. The protein localises to the perikaryon. Its subcellular location is the cell projection. It is found in the dendrite. Functionally, G-protein coupled receptor. Plays a role in the navigational capacity of sperm and promotes the targeting of sperm derived from males to the fertilization site in the uterus of hermaphrodites. The polypeptide is Serpentine receptor class beta-16 (Caenorhabditis elegans).